We begin with the raw amino-acid sequence, 151 residues long: Probable calcium-binding protein CML31 (151 aa).

EF-hand domains are found at residues 14–42 (ALFA…TLGE), 44–79 (VSDE…AEVE), 84–119 (RRGT…LGSD), and 120–151 (QDID…MMNA). The Ca(2+) site is built by aspartate 20, aspartate 22, aspartate 24, arginine 26, glutamate 31, aspartate 57, aspartate 59, aspartate 61, and glutamate 68. Residues aspartate 133, asparagine 135, aspartate 137, and glutamate 144 each coordinate Ca(2+).

In terms of biological role, potential calcium sensor. The chain is Probable calcium-binding protein CML31 (CML31) from Oryza sativa subsp. japonica (Rice).